The primary structure comprises 464 residues: ATP synthase subunit beta (464 aa).

153-160 lines the ATP pocket; it reads GGAGVGKT.

This sequence belongs to the ATPase alpha/beta chains family. As to quaternary structure, F-type ATPases have 2 components, CF(1) - the catalytic core - and CF(0) - the membrane proton channel. CF(1) has five subunits: alpha(3), beta(3), gamma(1), delta(1), epsilon(1). CF(0) has three main subunits: a(1), b(2) and c(9-12). The alpha and beta chains form an alternating ring which encloses part of the gamma chain. CF(1) is attached to CF(0) by a central stalk formed by the gamma and epsilon chains, while a peripheral stalk is formed by the delta and b chains.

The protein localises to the cell inner membrane. The enzyme catalyses ATP + H2O + 4 H(+)(in) = ADP + phosphate + 5 H(+)(out). Produces ATP from ADP in the presence of a proton gradient across the membrane. The catalytic sites are hosted primarily by the beta subunits. This Burkholderia vietnamiensis (strain G4 / LMG 22486) (Burkholderia cepacia (strain R1808)) protein is ATP synthase subunit beta.